Consider the following 253-residue polypeptide: uncharacterized protein (253 aa).

This sequence belongs to the methyltransferase superfamily.

This is an uncharacterized protein from Mycobacterium avium (strain 104).